The chain runs to 358 residues: Heme A synthase (358 aa).

The next 8 membrane-spanning stretches (helical) occupy residues 22 to 42, 107 to 127, 133 to 153, 172 to 192, 208 to 228, 269 to 289, 302 to 322, and 324 to 344; these read IQVW…VGGA, VLGR…WAIK, VLLQ…VGWW, LAFH…LSQG, FAGW…LVAG, FVHR…AFYV, AFFI…TLLQ, and VPIS…CFSV. Histidine 271 is a heme binding site. Histidine 332 is a heme binding site.

It belongs to the COX15/CtaA family. Type 2 subfamily. Interacts with CtaB. Heme b serves as cofactor.

It is found in the cell membrane. The catalysed reaction is Fe(II)-heme o + 2 A + H2O = Fe(II)-heme a + 2 AH2. It functions in the pathway porphyrin-containing compound metabolism; heme A biosynthesis; heme A from heme O: step 1/1. Functionally, catalyzes the conversion of heme O to heme A by two successive hydroxylations of the methyl group at C8. The first hydroxylation forms heme I, the second hydroxylation results in an unstable dihydroxymethyl group, which spontaneously dehydrates, resulting in the formyl group of heme A. This chain is Heme A synthase, found in Bartonella henselae (strain ATCC 49882 / DSM 28221 / CCUG 30454 / Houston 1) (Rochalimaea henselae).